The primary structure comprises 527 residues: T-complex protein 1 subunit delta (527 aa).

Belongs to the TCP-1 chaperonin family. Heterooligomeric complex of about 850 to 900 kDa that forms two stacked rings, 12 to 16 nm in diameter.

It is found in the cytoplasm. Molecular chaperone; assists the folding of proteins upon ATP hydrolysis. Known to play a role, in vitro, in the folding of actin and tubulin. The polypeptide is T-complex protein 1 subunit delta (cct4) (Schizosaccharomyces pombe (strain 972 / ATCC 24843) (Fission yeast)).